Reading from the N-terminus, the 244-residue chain is NAD-dependent protein deacylase SIR2rp3 (244 aa).

Residues 1-239 enclose the Deacetylase sirtuin-type domain; the sequence is MRRPNGMIAI…PAWADEVLHG (239 aa). An NAD(+)-binding site is contributed by 13 to 32; sequence GAGISAESGISTFRDQNGLW. The substrate site is built by Y57 and R60. Residue 95 to 98 coordinates NAD(+); the sequence is QNID. H113 serves as the catalytic Proton acceptor. Zn(2+)-binding residues include C121 and C141. Residues 181–183 and A225 each bind NAD(+); that span reads GTS.

Belongs to the sirtuin family. Class III subfamily. It depends on Zn(2+) as a cofactor.

It is found in the mitochondrion. It carries out the reaction N(6)-malonyl-L-lysyl-[protein] + NAD(+) + H2O = 2''-O-malonyl-ADP-D-ribose + nicotinamide + L-lysyl-[protein]. The catalysed reaction is N(6)-succinyl-L-lysyl-[protein] + NAD(+) + H2O = 2''-O-succinyl-ADP-D-ribose + nicotinamide + L-lysyl-[protein]. The enzyme catalyses N(6)-glutaryl-L-lysyl-[protein] + NAD(+) + H2O = 2''-O-glutaryl-ADP-D-ribose + nicotinamide + L-lysyl-[protein]. Functionally, NAD-dependent lysine demalonylase, desuccinylase and deglutarylase that specifically removes malonyl, succinyl and glutaryl groups on target proteins. Has weak NAD-dependent protein deacetylase activity; however this activity may not be physiologically relevant in vivo. The chain is NAD-dependent protein deacylase SIR2rp3 (SIR2rp3) from Trypanosoma brucei brucei (strain 927/4 GUTat10.1).